A 72-amino-acid chain; its full sequence is UPF0270 protein YheU (72 aa).

The protein belongs to the UPF0270 family.

The polypeptide is UPF0270 protein YheU (Shigella dysenteriae serotype 1 (strain Sd197)).